Consider the following 164-residue polypeptide: Peptide deformylase-like (164 aa).

Residue glutamate 134 is part of the active site.

The protein belongs to the polypeptide deformylase family.

The protein is Peptide deformylase-like of Brucella melitensis biotype 1 (strain ATCC 23456 / CCUG 17765 / NCTC 10094 / 16M).